Reading from the N-terminus, the 121-residue chain is Large ribosomal subunit protein uL14 (121 aa).

The protein belongs to the universal ribosomal protein uL14 family. In terms of assembly, part of the 50S ribosomal subunit. Forms a cluster with proteins L3 and L19. In the 70S ribosome, L14 and L19 interact and together make contacts with the 16S rRNA in bridges B5 and B8.

Its function is as follows. Binds to 23S rRNA. Forms part of two intersubunit bridges in the 70S ribosome. This Bacteroides fragilis (strain ATCC 25285 / DSM 2151 / CCUG 4856 / JCM 11019 / LMG 10263 / NCTC 9343 / Onslow / VPI 2553 / EN-2) protein is Large ribosomal subunit protein uL14.